Reading from the N-terminus, the 392-residue chain is Phosphopentomutase (392 aa).

6 residues coordinate Mn(2+): Asp-10, Asp-282, His-287, Asp-323, His-324, and His-335.

Belongs to the phosphopentomutase family. Mn(2+) is required as a cofactor.

The protein localises to the cytoplasm. It carries out the reaction 2-deoxy-alpha-D-ribose 1-phosphate = 2-deoxy-D-ribose 5-phosphate. It catalyses the reaction alpha-D-ribose 1-phosphate = D-ribose 5-phosphate. It participates in carbohydrate degradation; 2-deoxy-D-ribose 1-phosphate degradation; D-glyceraldehyde 3-phosphate and acetaldehyde from 2-deoxy-alpha-D-ribose 1-phosphate: step 1/2. Its function is as follows. Isomerase that catalyzes the conversion of deoxy-ribose 1-phosphate (dRib-1-P) and ribose 1-phosphate (Rib-1-P) to deoxy-ribose 5-phosphate (dRib-5-P) and ribose 5-phosphate (Rib-5-P), respectively. The protein is Phosphopentomutase of Dictyoglomus thermophilum (strain ATCC 35947 / DSM 3960 / H-6-12).